We begin with the raw amino-acid sequence, 357 residues long: Chorismate synthase (357 aa).

NADP(+) is bound at residue Arg-47. FMN-binding positions include 123–125, Gly-281, 296–300, and Arg-324; these read RAS and KPTSS.

This sequence belongs to the chorismate synthase family. As to quaternary structure, homotetramer. FMNH2 serves as cofactor.

It carries out the reaction 5-O-(1-carboxyvinyl)-3-phosphoshikimate = chorismate + phosphate. The protein operates within metabolic intermediate biosynthesis; chorismate biosynthesis; chorismate from D-erythrose 4-phosphate and phosphoenolpyruvate: step 7/7. Catalyzes the anti-1,4-elimination of the C-3 phosphate and the C-6 proR hydrogen from 5-enolpyruvylshikimate-3-phosphate (EPSP) to yield chorismate, which is the branch point compound that serves as the starting substrate for the three terminal pathways of aromatic amino acid biosynthesis. This reaction introduces a second double bond into the aromatic ring system. This Chlamydia trachomatis serovar A (strain ATCC VR-571B / DSM 19440 / HAR-13) protein is Chorismate synthase.